Reading from the N-terminus, the 1004-residue chain is NACHT, LRR and PYD domains-containing protein 9C (1004 aa).

Positions 1-92 constitute a Pyrin domain; the sequence is MVDSSSYGLL…TMAQIERRDK (92 aa). The 323-residue stretch at 143-465 folds into the NACHT domain; it reads ATAVVLGTRG…KQDKDTYHPV (323 aa). An ATP-binding site is contributed by 149-156; the sequence is GTRGKGKT. 5 LRR repeats span residues 750 to 770, 779 to 800, 807 to 828, 836 to 857, and 864 to 884; these read KVKHLSLVENPLKNKGVMFLC, VLESLMLSYCCLTFIACGHLYE, HLSLLDLGSNFLEDIGVNLLCE, TLKELWLPGCYLTSECCEEISA, and NLKTLKLGNNNIQDTGVKRLC.

Belongs to the NLRP family. In terms of tissue distribution, oocyte specific.

The protein localises to the cytoplasm. Its function is as follows. May be involved in inflammation. The chain is NACHT, LRR and PYD domains-containing protein 9C (Nlrp9c) from Mus musculus (Mouse).